We begin with the raw amino-acid sequence, 107 residues long: Large ribosomal subunit protein uL24 (107 aa).

The protein belongs to the universal ribosomal protein uL24 family. In terms of assembly, part of the 50S ribosomal subunit.

Its function is as follows. One of two assembly initiator proteins, it binds directly to the 5'-end of the 23S rRNA, where it nucleates assembly of the 50S subunit. Functionally, one of the proteins that surrounds the polypeptide exit tunnel on the outside of the subunit. The chain is Large ribosomal subunit protein uL24 from Streptomyces griseus subsp. griseus (strain JCM 4626 / CBS 651.72 / NBRC 13350 / KCC S-0626 / ISP 5235).